Reading from the N-terminus, the 650-residue chain is SPARC-like protein 1 (650 aa).

Positions 1 to 16 (MKAVLLLLCALGTAVA) are cleaved as a signal peptide. Positions 51 to 352 (TADIENHPSD…HGAGDDYFIP (302 aa)) are disordered. Residues 54-64 (IENHPSDKAEK) show a composition bias toward basic and acidic residues. Residues Ser70, Ser78, and Ser86 each carry the phosphoserine modification. Positions 75–85 (HEQSTEQDKTY) are enriched in basic and acidic residues. Residues 91–101 (LKDEEDGDGDL) are compositionally biased toward acidic residues. Composition is skewed to polar residues over residues 116–126 (EGTSEPQQKSL) and 135–148 (TVST…QRAN). Asn148 carries N-linked (GlcNAc...) asparagine glycosylation. 2 positions are modified to phosphoserine: Ser155 and Ser163. Over residues 157–174 (EQPVSDSHQQPNESSKQT) the composition is skewed to polar residues. N-linked (GlcNAc...) asparagine glycosylation is present at Asn168. Residues 189–210 (IPNEEEEEEEDEEEEEEEEPED) show a composition bias toward acidic residues. Ser272 is modified (phosphoserine). A compositionally biased stretch (basic and acidic residues) spans 277-299 (EDKAAGSKEHIPHTEQQDQEGKA). Phosphoserine is present on Ser353. Positions 375-415 (EETTTGESENRREAADNQEAKKAESSPNAEPSDEGNSREHS) are disordered. A compositionally biased stretch (basic and acidic residues) spans 382–398 (SENRREAADNQEAKKAE). Phosphoserine is present on Ser406. In terms of domain architecture, Follistatin-like spans 418-440 (SCTNFQCKRGHICKTDPQGKPHC). Intrachain disulfides connect Cys419–Cys430, Cys424–Cys440, Cys442–Cys476, Cys448–Cys469, Cys458–Cys495, Cys501–Cys612, and Cys620–Cys636. The Kazal-like domain occupies 436–497 (GKPHCVCQDP…QLDYFGACKS (62 aa)). Residue Asn462 is glycosylated (N-linked (GlcNAc...) asparagine). Positions 608-643 (PMEHCITRFFEECDPNKDKHITLKEWGHCFGIKEED) constitute an EF-hand domain. Ca(2+) is bound by residues Asp621, Asn623, Asp625, His627, and Glu632.

It belongs to the SPARC family. Highest expression in brain. Moderate levels in heart, adrenal gland, epididymis and lung. Low levels in kidney, eye, liver, spleen, submandibular gland and testis.

It localises to the secreted. Its subcellular location is the extracellular space. The protein resides in the extracellular matrix. The protein is SPARC-like protein 1 (Sparcl1) of Mus musculus (Mouse).